Here is a 108-residue protein sequence, read N- to C-terminus: Integration host factor subunit alpha (108 aa).

The protein belongs to the bacterial histone-like protein family. As to quaternary structure, heterodimer of an alpha and a beta chain.

Functionally, this protein is one of the two subunits of integration host factor, a specific DNA-binding protein that functions in genetic recombination as well as in transcriptional and translational control. This is Integration host factor subunit alpha from Methylorubrum populi (strain ATCC BAA-705 / NCIMB 13946 / BJ001) (Methylobacterium populi).